Here is a 629-residue protein sequence, read N- to C-terminus: tRNA uridine 5-carboxymethylaminomethyl modification enzyme MnmG (629 aa).

FAD contacts are provided by residues 13–18 (GGGHAG), V125, and S180. An NAD(+)-binding site is contributed by 273 to 287 (GPRYCPSIEDKVMRF). Q370 serves as a coordination point for FAD.

This sequence belongs to the MnmG family. As to quaternary structure, homodimer. Heterotetramer of two MnmE and two MnmG subunits. FAD serves as cofactor.

It localises to the cytoplasm. Its function is as follows. NAD-binding protein involved in the addition of a carboxymethylaminomethyl (cmnm) group at the wobble position (U34) of certain tRNAs, forming tRNA-cmnm(5)s(2)U34. In Shigella sonnei (strain Ss046), this protein is tRNA uridine 5-carboxymethylaminomethyl modification enzyme MnmG.